A 154-amino-acid chain; its full sequence is uncharacterized protein (154 aa).

Coiled coils occupy residues 8–48 (DEEV…AIEA) and 89–138 (VQEL…RGLV).

This is an uncharacterized protein from Treponema pallidum (strain Nichols).